The sequence spans 302 residues: Lipoyl synthase (302 aa).

Cysteine 44, cysteine 49, cysteine 55, cysteine 70, cysteine 74, cysteine 77, and serine 283 together coordinate [4Fe-4S] cluster. The Radical SAM core domain maps to 56-272 (WSKKHATVMI…AKVARSKGFL (217 aa)).

It belongs to the radical SAM superfamily. Lipoyl synthase family. Requires [4Fe-4S] cluster as cofactor.

It localises to the cytoplasm. It carries out the reaction [[Fe-S] cluster scaffold protein carrying a second [4Fe-4S](2+) cluster] + N(6)-octanoyl-L-lysyl-[protein] + 2 oxidized [2Fe-2S]-[ferredoxin] + 2 S-adenosyl-L-methionine + 4 H(+) = [[Fe-S] cluster scaffold protein] + N(6)-[(R)-dihydrolipoyl]-L-lysyl-[protein] + 4 Fe(3+) + 2 hydrogen sulfide + 2 5'-deoxyadenosine + 2 L-methionine + 2 reduced [2Fe-2S]-[ferredoxin]. It functions in the pathway protein modification; protein lipoylation via endogenous pathway; protein N(6)-(lipoyl)lysine from octanoyl-[acyl-carrier-protein]: step 2/2. Catalyzes the radical-mediated insertion of two sulfur atoms into the C-6 and C-8 positions of the octanoyl moiety bound to the lipoyl domains of lipoate-dependent enzymes, thereby converting the octanoylated domains into lipoylated derivatives. The chain is Lipoyl synthase from Orientia tsutsugamushi (strain Boryong) (Rickettsia tsutsugamushi).